A 511-amino-acid polypeptide reads, in one-letter code: MATDIDMLIDLGLDLSDSDLDEDPPEPAESRRDDLESDSSGECSSSDEDMEDPHGEDGPEPILDAARPAVRPSRPEDPGVPSTQTPRPTERQGPNDPQPAPHSVWSRLGARRPSCSPEQHGGKVARLQPPPTKAQPARGGRRGRRRGRGRGGPGAADGLSDPRRRAPRTNRNPGDRPGAGWTDGPGAPHGEAWRGSEQPDPPGGPRTRGVRQAPPPLMTLAIAPPPADPRAPAPERKAPAADTIDATTRLVLRSISERAAVDRISESFGRSAQVMPDPFGGQPFPAANSPWAPVLAGQGGPFDAETRRVSWETLVAHGPSLYRTFAGNPRAASTAKAMRDCVLRQENFIEALASADETLAWCKMCIHHNLPLRPQDPIIGTTAAVLDNLATRLRPFLQCYLKARGLCGLDELCSRRRLADIKDIASFVFVILARLANRVERGVAEIDYATLGVGVGEKMHFYLPGACMAGLIEILDTHRQECSSRVCELTASHIVAPPYVHGKYFYCNSLF.

The span at 1-15 shows a compositional bias: low complexity; it reads MATDIDMLIDLGLDL. The tract at residues 1–244 is disordered; sequence MATDIDMLID…ERKAPAADTI (244 aa). The Nuclear export signal motif lies at 5-17; sequence IDMLIDLGLDLSD. Phosphoserine; by host is present on residues serine 16 and serine 18. Acidic residues-rich tracts occupy residues 16–26 and 35–51; these read SDSDLDEDPPE and LESDSSGECSSSDEDME. An interaction with host ALYREF region spans residues 104–112; the sequence is VWSRLGARR. The Nuclear localization signal signature appears at 110–138; it reads ARRPSCSPEQHGGKVARLQPPPTKAQPAR. Serine 114 is subject to Phosphoserine; by host. Arginine 138 is modified (dimethylated arginine; by host). The segment at 138 to 152 is RGG-box; sequence RGGRRGRRRGRGRGG. Residues 139 to 149 show a composition bias toward basic residues; it reads GGRRGRRRGRG. Arginine 148 is subject to Omega-N-methylarginine; by host. Position 150 is a dimethylated arginine; by host (arginine 150). Pro residues predominate over residues 213-232; that stretch reads APPPLMTLAIAPPPADPRAP. Zn(2+) contacts are provided by cysteine 399, histidine 478, cysteine 482, and cysteine 487. The CHC2-type zinc finger occupies 399–487; the sequence is CYLKARGLCG…HRQECSSRVC (89 aa).

It belongs to the HHV-1 ICP27 protein family. As to quaternary structure, interacts with host RBP1; this interaction facilitates the RNA polymerase recruitment to viral transcription sites. Interacts (via the RGG box) with host ALYREF/THOC4; this interaction recruits ALYREF to viral replication compartments and probably directs viral mRNA to the TAP/NFX1 pathway. Interacts (via the RGG box) with host SRPK1; this interaction relocalizes SRPK1 to the nucleus and seems to alter its activity. Interacts with ICP4; this interaction modulates ICP4 DNA-binding activity. Interacts with host NXF1; this interaction allows efficient export of HSV-1 early and late transcripts. Methylated within the RGG box possibly by host PRMT1. When hypomethylated, ICP27 is exported to the cytoplasm earlier and more rapidly. Post-translationally, phosphorylated.

Its subcellular location is the host cytoplasm. It localises to the host nucleus. Its function is as follows. Multifunctional regulator of the expression of viral genes that contributes to the shutoff of host protein synthesis and mediates nuclear export of viral intronless mRNAs. Early in infection, this immediate early (EI) protein mediates the inhibition of cellular splicing. This results in the accumulation of unprocessed 3'end pre-mRNAs which can't be exported from the nucleus. Cellular protein synthesis is thereby shut off early after virus infection. Later in the infection, it helps recruit cellular RNA polymerase II to viral replication sites and promotes the nuclear export of viral intronless mRNAs by interacting with mRNAs and host NXF1/TAP. ICP27 binds to NUP62 which may provide facilitated viral mRNA export and may compete with some host cell transport receptors for binding and inhibit cellular nucleocytoplasmic transport pathways. Also stimulates translation of viral transcripts. Repression of host gene expression blocks the cell cycle at the G1 phase and prevents apoptosis. Seems to silence the 3' splice site of the promyelocytic leukemia (PML) intron 7a, thereby switching PML isoforms from PML-II to PML-V. This could be linked to the accelerated mRNA export induced by ICP27 which might not provide sufficient time for PML pre-mRNA to be spliced in the nucleus. This chain is mRNA export factor, found in Human herpesvirus 1 (strain HFEM) (HHV-1).